A 345-amino-acid chain; its full sequence is Alanine racemase (345 aa).

The active-site Proton acceptor; specific for D-alanine is the lysine 33. Lysine 33 carries the post-translational modification N6-(pyridoxal phosphate)lysine. Residue arginine 128 participates in substrate binding. Tyrosine 242 serves as the catalytic Proton acceptor; specific for L-alanine. A substrate-binding site is contributed by methionine 291.

The protein belongs to the alanine racemase family. Requires pyridoxal 5'-phosphate as cofactor.

It catalyses the reaction L-alanine = D-alanine. Its pathway is amino-acid biosynthesis; D-alanine biosynthesis; D-alanine from L-alanine: step 1/1. Catalyzes the interconversion of L-alanine and D-alanine. May also act on other amino acids. This chain is Alanine racemase (alr), found in Ruegeria sp. (strain TM1040) (Silicibacter sp.).